A 408-amino-acid polypeptide reads, in one-letter code: Neutral cholesterol ester hydrolase 1 (408 aa).

Over 1 to 4 the chain is Cytoplasmic; that stretch reads MRSS. Residues 5–25 traverse the membrane as a helical; Signal-anchor for type II membrane protein segment; it reads CVLLTALVALAAYYVYIPLPG. The Lumenal portion of the chain corresponds to 26–408; sequence SVSDPWKLML…SYIKWLDQNL (383 aa). An Involved in the stabilization of the negatively charged intermediate by the formation of the oxyanion hole motif is present at residues 113–115; it reads HGG. Residue serine 191 is part of the active site. Asparagine 270 and asparagine 287 each carry an N-linked (GlcNAc...) asparagine glycan. Residues aspartate 348 and histidine 378 contribute to the active site. Residue asparagine 389 is glycosylated (N-linked (GlcNAc...) asparagine).

The protein belongs to the 'GDXG' lipolytic enzyme family. In terms of processing, N-glycosylated.

It is found in the cell membrane. The protein resides in the microsome. It carries out the reaction a 1-O-alkyl-2-acetyl-sn-glycerol + H2O = a 1-O-alkyl-sn-glycerol + acetate + H(+). It catalyses the reaction 1-O-hexadecyl-2-acetyl-sn-glycerol + H2O = 1-O-hexadecyl-sn-glycerol + acetate + H(+). The catalysed reaction is a cholesterol ester + H2O = cholesterol + a fatty acid + H(+). The enzyme catalyses cholesteryl (9Z-octadecenoate) + H2O = cholesterol + (9Z)-octadecenoate + H(+). Hydrolyzes 2-acetyl monoalkylglycerol ether (1-O-alkyl-2-acetyl-sn-glycerol), the penultimate precursor of the pathway for de novo synthesis of platelet-activating factor. May be responsible for the hydrolysis of cholesterol esters (such as cholesteryl (9Z-octadecenoate)) in macrophages. Also involved in organ detoxification by hydrolyzing exogenous organophosphorus compounds. The chain is Neutral cholesterol ester hydrolase 1 (NCEH1) from Pongo abelii (Sumatran orangutan).